Consider the following 218-residue polypeptide: Stress response regulator protein 1 (218 aa).

The Response regulatory domain occupies 90–209 (RFLLVDDNSI…YRVVLDVVDN (120 aa)). Aspartate 142 is modified (4-aspartylphosphate).

Its function is as follows. Required for stress adaptation, morphogenesis and virulence. The sequence is that of Stress response regulator protein 1 (SRR1) from Meyerozyma guilliermondii (strain ATCC 6260 / CBS 566 / DSM 6381 / JCM 1539 / NBRC 10279 / NRRL Y-324) (Yeast).